The sequence spans 393 residues: Acetate kinase (393 aa).

Position 7 (Asn-7) interacts with Mg(2+). Lys-14 serves as a coordination point for ATP. Position 89 (Arg-89) interacts with substrate. Asp-146 (proton donor/acceptor) is an active-site residue. ATP-binding positions include 204 to 208 (HIGNG), 279 to 281 (DSR), and 327 to 331 (GIGEN). Glu-379 is a Mg(2+) binding site.

The protein belongs to the acetokinase family. As to quaternary structure, homodimer. Mg(2+) is required as a cofactor. Requires Mn(2+) as cofactor.

It is found in the cytoplasm. The catalysed reaction is acetate + ATP = acetyl phosphate + ADP. The protein operates within metabolic intermediate biosynthesis; acetyl-CoA biosynthesis; acetyl-CoA from acetate: step 1/2. Its function is as follows. Catalyzes the formation of acetyl phosphate from acetate and ATP. Can also catalyze the reverse reaction. This is Acetate kinase from Acholeplasma laidlawii (strain PG-8A).